Here is a 608-residue protein sequence, read N- to C-terminus: MDELTLSIGGSPGKLAGTQLLYKQKIDKEIRLSPTDLLFSSNTVDHKLRNKRTTIALLSREVQARLGKWMISFADQKGTAADFGLQLAKWVQASTQLHYYVHPADMSALRAADQSLIRQLPRVTVEVCKTKKVSQTDPIEHKYQSRPGMIEGGVTITPRQAVTLEEIYPLASRPEKGVIMFMLSQAHLEHLIHPVIKQVSNYFTCVKVGTSGFSLNYNHPYIRAMFLEPITACDVVELPLQALHARFSAGKGHLYLCGDGHAPRTLTCAQMFDIPHVHDFTMPSVTVVSFYAPEQHIAIARYASWYEKDTICRLLQSTLPDVEKLVWLCAMSYPIFPSLRPTLTGSIFSRCKVVVSVSAERSRLLSDGLPKWAEWVDNVLSDRIAKPACLILIGPKASSKSFVTRQLVAKLNASSLSVEGDNFGRVDSDAFGKWVTMMVSNSTLPTSWAQFDLMQNDKEIASYVDIRFNDICVKHGFCELDDLRTKNAGVLQGEFARSFIEIIKDPSCGLRAFFSWLFSLYGLPRGLMLESHTNVEIAEYPPTTCILQLLPNYDVMSVLLERDARKGISKLAEMQMEEYYNGLRIGTYRSVLACELLRVAEVGPPVEG.

It localises to the virion. The protein localises to the host cytoplasm. The protein resides in the host cytoskeleton. Minor inner capsid component. Displays NTPase and RNA 5'-triphosphatase (RTPase) activities. May function as a cofactor of polymerase. Associates with microtubules and plays a role in the formation, structural organization and morphology of viral inclusions, where the assembly of cores and the replication of viral RNA occur. The polypeptide is Microtubule-associated protein VP7 (Oryza latifolia (Indian wild rice)).